Reading from the N-terminus, the 325-residue chain is Holliday junction branch migration complex subunit RuvB (325 aa).

Residues 1-172 are large ATPase domain (RuvB-L); it reads MENNELLDIT…FGVVFRLEFY (172 aa). ATP-binding positions include L11, R12, G53, K56, T57, T58, 119 to 121, R162, Y172, and R209; that span reads EDF. T57 lines the Mg(2+) pocket. Residues 173 to 243 form a small ATPAse domain (RuvB-S) region; that stretch reads NSEELKEIVK…IAQEALIAMD (71 aa). The segment at 246-325 is head domain (RuvB-H); sequence DYGLDDMDRK…LKRKIPERLF (80 aa). The DNA site is built by R301 and R306.

The protein belongs to the RuvB family. As to quaternary structure, homohexamer. Forms an RuvA(8)-RuvB(12)-Holliday junction (HJ) complex. HJ DNA is sandwiched between 2 RuvA tetramers; dsDNA enters through RuvA and exits via RuvB. An RuvB hexamer assembles on each DNA strand where it exits the tetramer. Each RuvB hexamer is contacted by two RuvA subunits (via domain III) on 2 adjacent RuvB subunits; this complex drives branch migration. In the full resolvosome a probable DNA-RuvA(4)-RuvB(12)-RuvC(2) complex forms which resolves the HJ.

It localises to the cytoplasm. It carries out the reaction ATP + H2O = ADP + phosphate + H(+). The RuvA-RuvB-RuvC complex processes Holliday junction (HJ) DNA during genetic recombination and DNA repair, while the RuvA-RuvB complex plays an important role in the rescue of blocked DNA replication forks via replication fork reversal (RFR). RuvA specifically binds to HJ cruciform DNA, conferring on it an open structure. The RuvB hexamer acts as an ATP-dependent pump, pulling dsDNA into and through the RuvAB complex. RuvB forms 2 homohexamers on either side of HJ DNA bound by 1 or 2 RuvA tetramers; 4 subunits per hexamer contact DNA at a time. Coordinated motions by a converter formed by DNA-disengaged RuvB subunits stimulates ATP hydrolysis and nucleotide exchange. Immobilization of the converter enables RuvB to convert the ATP-contained energy into a lever motion, pulling 2 nucleotides of DNA out of the RuvA tetramer per ATP hydrolyzed, thus driving DNA branch migration. The RuvB motors rotate together with the DNA substrate, which together with the progressing nucleotide cycle form the mechanistic basis for DNA recombination by continuous HJ branch migration. Branch migration allows RuvC to scan DNA until it finds its consensus sequence, where it cleaves and resolves cruciform DNA. This chain is Holliday junction branch migration complex subunit RuvB, found in Thermodesulfovibrio yellowstonii (strain ATCC 51303 / DSM 11347 / YP87).